The primary structure comprises 182 residues: Ribosome-recycling factor (182 aa).

This sequence belongs to the RRF family.

It is found in the cytoplasm. Its function is as follows. Responsible for the release of ribosomes from messenger RNA at the termination of protein biosynthesis. May increase the efficiency of translation by recycling ribosomes from one round of translation to another. The polypeptide is Ribosome-recycling factor (Prochlorococcus marinus (strain MIT 9313)).